A 212-amino-acid polypeptide reads, in one-letter code: Pyridoxine/pyridoxamine 5'-phosphate oxidase (212 aa).

Substrate-binding positions include 8–11 (RREY) and Lys-66. FMN contacts are provided by residues 61–66 (RIVLLK), 76–77 (FT), Arg-82, Lys-83, and Gln-105. Substrate-binding residues include Tyr-123, Arg-127, and Ser-131. FMN contacts are provided by residues 140-141 (QS) and Trp-185. 191-193 (RLH) is a substrate binding site. Arg-195 is an FMN binding site.

This sequence belongs to the pyridoxamine 5'-phosphate oxidase family. Homodimer. FMN is required as a cofactor.

The enzyme catalyses pyridoxamine 5'-phosphate + O2 + H2O = pyridoxal 5'-phosphate + H2O2 + NH4(+). It catalyses the reaction pyridoxine 5'-phosphate + O2 = pyridoxal 5'-phosphate + H2O2. Its pathway is cofactor metabolism; pyridoxal 5'-phosphate salvage; pyridoxal 5'-phosphate from pyridoxamine 5'-phosphate: step 1/1. It functions in the pathway cofactor metabolism; pyridoxal 5'-phosphate salvage; pyridoxal 5'-phosphate from pyridoxine 5'-phosphate: step 1/1. Functionally, catalyzes the oxidation of either pyridoxine 5'-phosphate (PNP) or pyridoxamine 5'-phosphate (PMP) into pyridoxal 5'-phosphate (PLP). The chain is Pyridoxine/pyridoxamine 5'-phosphate oxidase from Shewanella amazonensis (strain ATCC BAA-1098 / SB2B).